A 299-amino-acid polypeptide reads, in one-letter code: tRNA dimethylallyltransferase (299 aa).

13 to 20 contacts ATP; the sequence is GPTASGKT. 15–20 contributes to the substrate binding site; that stretch reads TASGKT. Positions 38 to 41 are interaction with substrate tRNA; it reads DSRQ.

It belongs to the IPP transferase family. In terms of assembly, monomer. Mg(2+) serves as cofactor.

The enzyme catalyses adenosine(37) in tRNA + dimethylallyl diphosphate = N(6)-dimethylallyladenosine(37) in tRNA + diphosphate. Functionally, catalyzes the transfer of a dimethylallyl group onto the adenine at position 37 in tRNAs that read codons beginning with uridine, leading to the formation of N6-(dimethylallyl)adenosine (i(6)A). The chain is tRNA dimethylallyltransferase from Parasynechococcus marenigrum (strain WH8102).